The primary structure comprises 178 residues: uncharacterized protein (178 aa).

A helical transmembrane segment spans residues 7–27; it reads LAIGTAILLIGMAYWTVSIVE.

The protein resides in the membrane. This is an uncharacterized protein from Methanocaldococcus jannaschii (strain ATCC 43067 / DSM 2661 / JAL-1 / JCM 10045 / NBRC 100440) (Methanococcus jannaschii).